A 138-amino-acid polypeptide reads, in one-letter code: Phospholipase A2 EC3 (138 aa).

A signal peptide spans 1 to 16 (MRTLWIVAVWLMGVEG). 7 disulfides stabilise this stretch: cysteine 42/cysteine 131, cysteine 44/cysteine 60, cysteine 59/cysteine 111, cysteine 65/cysteine 138, cysteine 66/cysteine 104, cysteine 73/cysteine 97, and cysteine 91/cysteine 102. Residues tyrosine 43, glycine 45, and glycine 47 each coordinate Ca(2+). Histidine 63 is an active-site residue. Aspartate 64 is a binding site for Ca(2+). Aspartate 105 is a catalytic residue.

It belongs to the phospholipase A2 family. Group II subfamily. Ca(2+) serves as cofactor.

It is found in the secreted. The enzyme catalyses a 1,2-diacyl-sn-glycero-3-phosphocholine + H2O = a 1-acyl-sn-glycero-3-phosphocholine + a fatty acid + H(+). Its function is as follows. PA2 catalyzes the calcium-dependent hydrolysis of the 2-acyl groups in 3-sn-phosphoglycerides. The polypeptide is Phospholipase A2 EC3 (Echis coloratus (Carpet viper)).